The sequence spans 344 residues: Dihydroorotase (344 aa).

Zn(2+)-binding residues include H14 and H16. Residues 16–18 (HLR) and N42 each bind substrate. Zn(2+)-binding residues include K100, H137, and H175. K100 is subject to N6-carboxylysine. H137 lines the substrate pocket. L220 provides a ligand contact to substrate. D248 provides a ligand contact to Zn(2+). Residue D248 is part of the active site. The substrate site is built by H252 and A264.

Belongs to the metallo-dependent hydrolases superfamily. DHOase family. Class II DHOase subfamily. As to quaternary structure, homodimer. Zn(2+) serves as cofactor.

It catalyses the reaction (S)-dihydroorotate + H2O = N-carbamoyl-L-aspartate + H(+). Its pathway is pyrimidine metabolism; UMP biosynthesis via de novo pathway; (S)-dihydroorotate from bicarbonate: step 3/3. In terms of biological role, catalyzes the reversible cyclization of carbamoyl aspartate to dihydroorotate. The protein is Dihydroorotase of Roseobacter denitrificans (strain ATCC 33942 / OCh 114) (Erythrobacter sp. (strain OCh 114)).